The sequence spans 83 residues: Small ribosomal subunit protein bS16 (83 aa).

This sequence belongs to the bacterial ribosomal protein bS16 family.

In Polaromonas sp. (strain JS666 / ATCC BAA-500), this protein is Small ribosomal subunit protein bS16.